The primary structure comprises 50 residues: Large ribosomal subunit protein bL33B (50 aa).

It belongs to the bacterial ribosomal protein bL33 family.

This chain is Large ribosomal subunit protein bL33B, found in Streptococcus pneumoniae (strain ATCC BAA-255 / R6).